The primary structure comprises 106 residues: SH3 domain-binding glutamic acid-rich-like protein 2-B (106 aa).

The SH3-binding motif lies at 61 to 67 (QGNPLPP).

Belongs to the SH3BGR family.

Its subcellular location is the nucleus. In Xenopus laevis (African clawed frog), this protein is SH3 domain-binding glutamic acid-rich-like protein 2-B (sh3bgrl2-b).